The chain runs to 840 residues: DNA gyrase subunit A (840 aa).

Residues 51–516 (LPDVRDGFKP…VSSHIDDEDL (466 aa)) form the Topo IIA-type catalytic domain. The active-site O-(5'-phospho-DNA)-tyrosine intermediate is Tyr-139. Positions 543–549 (QRRGGVG) match the GyrA-box motif.

It belongs to the type II topoisomerase GyrA/ParC subunit family. As to quaternary structure, heterotetramer, composed of two GyrA and two GyrB chains. In the heterotetramer, GyrA contains the active site tyrosine that forms a transient covalent intermediate with DNA, while GyrB binds cofactors and catalyzes ATP hydrolysis.

The protein resides in the cytoplasm. The enzyme catalyses ATP-dependent breakage, passage and rejoining of double-stranded DNA.. In terms of biological role, a type II topoisomerase that negatively supercoils closed circular double-stranded (ds) DNA in an ATP-dependent manner to modulate DNA topology and maintain chromosomes in an underwound state. Negative supercoiling favors strand separation, and DNA replication, transcription, recombination and repair, all of which involve strand separation. Also able to catalyze the interconversion of other topological isomers of dsDNA rings, including catenanes and knotted rings. Type II topoisomerases break and join 2 DNA strands simultaneously in an ATP-dependent manner. The polypeptide is DNA gyrase subunit A (Ureaplasma parvum serovar 3 (strain ATCC 700970)).